The sequence spans 208 residues: Uracil phosphoribosyltransferase (208 aa).

5-phospho-alpha-D-ribose 1-diphosphate contacts are provided by residues Arg-78, Arg-103, and Asp-130–Ser-138. Uracil-binding positions include Ile-193 and Gly-198–Ala-200. Residue Asp-199 participates in 5-phospho-alpha-D-ribose 1-diphosphate binding.

This sequence belongs to the UPRTase family. The cofactor is Mg(2+).

The enzyme catalyses UMP + diphosphate = 5-phospho-alpha-D-ribose 1-diphosphate + uracil. It participates in pyrimidine metabolism; UMP biosynthesis via salvage pathway; UMP from uracil: step 1/1. Allosterically activated by GTP. Catalyzes the conversion of uracil and 5-phospho-alpha-D-ribose 1-diphosphate (PRPP) to UMP and diphosphate. In Sodalis glossinidius (strain morsitans), this protein is Uracil phosphoribosyltransferase.